Reading from the N-terminus, the 243-residue chain is Pyridoxine 5'-phosphate synthase (243 aa).

N9 contacts 3-amino-2-oxopropyl phosphate. 11 to 12 (DH) is a binding site for 1-deoxy-D-xylulose 5-phosphate. R20 provides a ligand contact to 3-amino-2-oxopropyl phosphate. H45 serves as the catalytic Proton acceptor. R47 and H52 together coordinate 1-deoxy-D-xylulose 5-phosphate. E72 acts as the Proton acceptor in catalysis. T102 serves as a coordination point for 1-deoxy-D-xylulose 5-phosphate. H193 functions as the Proton donor in the catalytic mechanism. 3-amino-2-oxopropyl phosphate-binding positions include G194 and 215 to 216 (GH).

The protein belongs to the PNP synthase family. In terms of assembly, homooctamer; tetramer of dimers.

It localises to the cytoplasm. It catalyses the reaction 3-amino-2-oxopropyl phosphate + 1-deoxy-D-xylulose 5-phosphate = pyridoxine 5'-phosphate + phosphate + 2 H2O + H(+). It participates in cofactor biosynthesis; pyridoxine 5'-phosphate biosynthesis; pyridoxine 5'-phosphate from D-erythrose 4-phosphate: step 5/5. Functionally, catalyzes the complicated ring closure reaction between the two acyclic compounds 1-deoxy-D-xylulose-5-phosphate (DXP) and 3-amino-2-oxopropyl phosphate (1-amino-acetone-3-phosphate or AAP) to form pyridoxine 5'-phosphate (PNP) and inorganic phosphate. This is Pyridoxine 5'-phosphate synthase from Shigella sonnei (strain Ss046).